The sequence spans 240 residues: Probable phosphatase Pcar_2586 (240 aa).

Positions 12, 14, 20, 45, 78, 105, 136, 197, and 199 each coordinate Zn(2+).

This sequence belongs to the PHP family. Zn(2+) is required as a cofactor.

The chain is Probable phosphatase Pcar_2586 from Syntrophotalea carbinolica (strain DSM 2380 / NBRC 103641 / GraBd1) (Pelobacter carbinolicus).